A 401-amino-acid polypeptide reads, in one-letter code: Divinyl chlorophyllide a 8-vinyl-reductase, chloroplastic (401 aa).

The span at 1–10 (MATILLSSRL) shows a compositional bias: polar residues. A disordered region spans residues 1–26 (MATILLSSRLPTTGTATPSPTRPAPR). Residues 1 to 54 (MATILLSSRLPTTGTATPSPTRPAPRFLSFPGTAIRRRGRGPLLASSAVSPPAP) constitute a chloroplast transit peptide.

It localises to the plastid. Its subcellular location is the chloroplast. It catalyses the reaction protochlorophyllide a + NADP(+) = 3,8-divinyl protochlorophyllide a + NADPH + H(+). The protein operates within porphyrin-containing compound metabolism; chlorophyll biosynthesis. Functionally, catalyzes the conversion of divinyl chlorophyllide to monovinyl chlorophyllide. Reduces the 8-vinyl group of the tetrapyrrole to an ethyl group using NADPH as the reductant. Can use (3,8-divinyl)-chlorophyllide a (DV-Chlidea) &gt; (3,8-divinyl)-chlorophyll a (DV-Chla) &gt; (3,8-divinyl)-protochlorophyllide a (DV-Pchlidea) &gt; (3,8-divinyl)-magnesium-protoporphyrin IX monomethyl ester (DV-MPE) &gt; (3,8-divinyl)-magnesium-protoporphyrin IX (DV-Mg-Proto) as substrates. In Zea mays (Maize), this protein is Divinyl chlorophyllide a 8-vinyl-reductase, chloroplastic (DVR).